Reading from the N-terminus, the 306-residue chain is Homoserine kinase (306 aa).

ATP is bound at residue 95-105; it reads PHSRGLGSSAA.

It belongs to the GHMP kinase family. Homoserine kinase subfamily.

The protein resides in the cytoplasm. It carries out the reaction L-homoserine + ATP = O-phospho-L-homoserine + ADP + H(+). Its pathway is amino-acid biosynthesis; L-threonine biosynthesis; L-threonine from L-aspartate: step 4/5. Catalyzes the ATP-dependent phosphorylation of L-homoserine to L-homoserine phosphate. The sequence is that of Homoserine kinase from Mycobacteroides abscessus (strain ATCC 19977 / DSM 44196 / CCUG 20993 / CIP 104536 / JCM 13569 / NCTC 13031 / TMC 1543 / L948) (Mycobacterium abscessus).